The primary structure comprises 342 residues: Nuclear distribution protein nudE homolog 1 (342 aa).

Residues 45–189 (REYEAELETQ…ELAVQQKQEK (145 aa)) adopt a coiled-coil conformation. The interval 89–157 (EWYRQVSALE…ERNAFLESEL (69 aa)) is interaction with PAFAH1B1. Disordered stretches follow at residues 182–203 (AVQQ…TERT) and 320–342 (GTRP…KMLL). Over residues 322-342 (RPSSTPGPMSHPSQSVVKMLL) the composition is skewed to polar residues.

Belongs to the nudE family. In terms of assembly, self-associates. Interacts with PAFAH1B1. In terms of processing, phosphorylated in mitosis.

Its subcellular location is the cytoplasm. The protein localises to the cytoskeleton. It localises to the microtubule organizing center. It is found in the centrosome. The protein resides in the spindle. Its subcellular location is the chromosome. The protein localises to the centromere. It localises to the kinetochore. It is found in the cleavage furrow. The protein resides in the cytoplasmic vesicle membrane. Its function is as follows. Required for centrosome duplication and formation and function of the mitotic spindle. This is Nuclear distribution protein nudE homolog 1 (NDE1) from Gallus gallus (Chicken).